The following is a 181-amino-acid chain: UPF0215 protein AF_1433 (181 aa).

The protein belongs to the UPF0215 family.

The chain is UPF0215 protein AF_1433 from Archaeoglobus fulgidus (strain ATCC 49558 / DSM 4304 / JCM 9628 / NBRC 100126 / VC-16).